The chain runs to 376 residues: Multiphosphoryl transfer protein (376 aa).

A PTS EIIA type-2 domain is found at 2-142 (FQLSVQDIHP…EELRALLMGE (141 aa)). Residue histidine 62 is the Tele-phosphohistidine intermediate; for EIIA activity of the active site. Phosphohistidine; by HPr is present on histidine 62. Residues 156–284 (TLDIVASDLL…LTSDDAPTDD (129 aa)) are m domain. Residues 285 to 375 (VLSAEFVVRN…DAIAAGLGEG (91 aa)) form the HPr domain. Histidine 299 (pros-phosphohistidine intermediate; for HPr activity) is an active-site residue. Histidine 299 bears the Phosphohistidine; by EI mark.

The protein localises to the cytoplasm. Its function is as follows. The phosphoenolpyruvate-dependent sugar phosphotransferase system (sugar PTS), a major carbohydrate active transport system, catalyzes the phosphorylation of incoming sugar substrates concomitantly with their translocation across the cell membrane. The enzyme II FruAB PTS system is involved in fructose transport. The sequence is that of Multiphosphoryl transfer protein from Escherichia coli O157:H7.